The primary structure comprises 181 residues: DNA-packaging protein NU1 homolog (181 aa).

This sequence to phage lambda DNA packaging protein NU1.

This Escherichia coli (strain K12) protein is DNA-packaging protein NU1 homolog (nohD).